Reading from the N-terminus, the 399-residue chain is Trimethyllysine dioxygenase (399 aa).

3 residues coordinate Fe cation: histidine 214, aspartate 216, and histidine 360.

The protein belongs to the gamma-BBH/TMLD family. The cofactor is Fe(2+). L-ascorbate is required as a cofactor.

The protein resides in the cytoplasm. The catalysed reaction is N(6),N(6),N(6)-trimethyl-L-lysine + 2-oxoglutarate + O2 = (3S)-3-hydroxy-N(6),N(6),N(6)-trimethyl-L-lysine + succinate + CO2. It participates in amine and polyamine biosynthesis; carnitine biosynthesis. Functionally, converts trimethyllysine (TML) into hydroxytrimethyllysine (HTML). This Meyerozyma guilliermondii (strain ATCC 6260 / CBS 566 / DSM 6381 / JCM 1539 / NBRC 10279 / NRRL Y-324) (Yeast) protein is Trimethyllysine dioxygenase.